We begin with the raw amino-acid sequence, 161 residues long: 6,7-dimethyl-8-ribityllumazine synthase (161 aa).

5-amino-6-(D-ribitylamino)uracil is bound by residues tryptophan 26, 58–60, and 81–83; these read SFE and VVI. (2S)-2-hydroxy-3-oxobutyl phosphate is bound at residue 86–87; that stretch reads GT. Residue histidine 89 is the Proton donor of the active site. Position 114 (phenylalanine 114) interacts with 5-amino-6-(D-ribitylamino)uracil. Position 128 (arginine 128) interacts with (2S)-2-hydroxy-3-oxobutyl phosphate.

It belongs to the DMRL synthase family.

The enzyme catalyses (2S)-2-hydroxy-3-oxobutyl phosphate + 5-amino-6-(D-ribitylamino)uracil = 6,7-dimethyl-8-(1-D-ribityl)lumazine + phosphate + 2 H2O + H(+). It functions in the pathway cofactor biosynthesis; riboflavin biosynthesis; riboflavin from 2-hydroxy-3-oxobutyl phosphate and 5-amino-6-(D-ribitylamino)uracil: step 1/2. Functionally, catalyzes the formation of 6,7-dimethyl-8-ribityllumazine by condensation of 5-amino-6-(D-ribitylamino)uracil with 3,4-dihydroxy-2-butanone 4-phosphate. This is the penultimate step in the biosynthesis of riboflavin. This is 6,7-dimethyl-8-ribityllumazine synthase from Streptomyces coelicolor (strain ATCC BAA-471 / A3(2) / M145).